The sequence spans 283 residues: DegV domain-containing protein BH3627 (283 aa).

One can recognise a DegV domain in the interval 4-281 (IAIVTDSTAY…EGSIGLSWYI (278 aa)). Residues Thr62 and Ser95 each contribute to the hexadecanoate site.

May bind long-chain fatty acids, such as palmitate, and may play a role in lipid transport or fatty acid metabolism. The polypeptide is DegV domain-containing protein BH3627 (Halalkalibacterium halodurans (strain ATCC BAA-125 / DSM 18197 / FERM 7344 / JCM 9153 / C-125) (Bacillus halodurans)).